The following is a 108-amino-acid chain: SRTLLLERGRWWEEETDPGVRGIDQSLANASQLGKGLGTKLVRALVELLFNDPEVTKIQTDPSPSNLRAIRCYEKAGFERQGTVTTPDGPAVYMVQTRQAFERTRSDA.

The 99-residue stretch at 1–99 folds into the N-acetyltransferase domain; the sequence is SRTLLLERGR…PAVYMVQTRQ (99 aa).

The protein is Kanamycin resistance protein of Rhizobium radiobacter (Agrobacterium tumefaciens).